A 98-amino-acid polypeptide reads, in one-letter code: Large ribosomal subunit protein uL23 (98 aa).

Belongs to the universal ribosomal protein uL23 family. In terms of assembly, part of the 50S ribosomal subunit. Contacts protein L29, and trigger factor when it is bound to the ribosome.

One of the early assembly proteins it binds 23S rRNA. One of the proteins that surrounds the polypeptide exit tunnel on the outside of the ribosome. Forms the main docking site for trigger factor binding to the ribosome. This Jannaschia sp. (strain CCS1) protein is Large ribosomal subunit protein uL23.